Here is a 409-residue protein sequence, read N- to C-terminus: Putative protein disulfide-isomerase DDB_G0275025 (409 aa).

An N-terminal signal peptide occupies residues 1-21; the sequence is MKLINICIFIFAIICIESTFG. In terms of domain architecture, Thioredoxin spans 28–140; the sequence is NVINLTKKNF…AKFSLAKLPS (113 aa). The cysteines at positions 57 and 60 are disulfide-linked. Residues 245-273 are disordered; the sequence is SNNDNNNNNNNNNNEESTKTTTTEKDPAS. The span at 247-259 shows a compositional bias: low complexity; that stretch reads NDNNNNNNNNNNE. Residues 260–273 are compositionally biased toward basic and acidic residues; sequence ESTKTTTTEKDPAS. Residues 406–409 carry the Prevents secretion from ER motif; sequence KDEL.

It belongs to the protein disulfide isomerase family.

It is found in the endoplasmic reticulum lumen. The enzyme catalyses Catalyzes the rearrangement of -S-S- bonds in proteins.. This chain is Putative protein disulfide-isomerase DDB_G0275025, found in Dictyostelium discoideum (Social amoeba).